We begin with the raw amino-acid sequence, 284 residues long: Bifunctional protein FolD (284 aa).

Residues 166-168 and isoleucine 232 contribute to the NADP(+) site; that span reads GAS.

The protein belongs to the tetrahydrofolate dehydrogenase/cyclohydrolase family. In terms of assembly, homodimer.

It catalyses the reaction (6R)-5,10-methylene-5,6,7,8-tetrahydrofolate + NADP(+) = (6R)-5,10-methenyltetrahydrofolate + NADPH. It carries out the reaction (6R)-5,10-methenyltetrahydrofolate + H2O = (6R)-10-formyltetrahydrofolate + H(+). It functions in the pathway one-carbon metabolism; tetrahydrofolate interconversion. In terms of biological role, catalyzes the oxidation of 5,10-methylenetetrahydrofolate to 5,10-methenyltetrahydrofolate and then the hydrolysis of 5,10-methenyltetrahydrofolate to 10-formyltetrahydrofolate. The sequence is that of Bifunctional protein FolD from Shewanella halifaxensis (strain HAW-EB4).